The primary structure comprises 491 residues: Chromosomal replication initiator protein DnaA (491 aa).

The tract at residues 1–69 is domain I, interacts with DnaA modulators; sequence MTTWDKCLKK…TIQECHGNDL (69 aa). The domain II stretch occupies residues 69–154; sequence LIIEYSNKKF…KEDEEYSFGL (86 aa). The segment at 155-371 is domain III, AAA+ region; sequence PLKEKYVFDS…GALNRVLTTS (217 aa). Residues glycine 199, glycine 201, lysine 202, and threonine 203 each coordinate ATP. The tract at residues 372–491 is domain IV, binds dsDNA; sequence KFNHKDPTIE…YELLLDKISR (120 aa).

It belongs to the DnaA family. Oligomerizes as a right-handed, spiral filament on DNA at oriC.

The protein resides in the cytoplasm. Functionally, plays an essential role in the initiation and regulation of chromosomal replication. ATP-DnaA binds to the origin of replication (oriC) to initiate formation of the DNA replication initiation complex once per cell cycle. Binds the DnaA box (a 9 base pair repeat at the origin) and separates the double-stranded (ds)DNA. Forms a right-handed helical filament on oriC DNA; dsDNA binds to the exterior of the filament while single-stranded (ss)DNA is stabiized in the filament's interior. The ATP-DnaA-oriC complex binds and stabilizes one strand of the AT-rich DNA unwinding element (DUE), permitting loading of DNA polymerase. After initiation quickly degrades to an ADP-DnaA complex that is not apt for DNA replication. Binds acidic phospholipids. The polypeptide is Chromosomal replication initiator protein DnaA (Francisella tularensis subsp. novicida (strain U112)).